Reading from the N-terminus, the 256-residue chain is uncharacterized protein (256 aa).

The first 24 residues, 1–24, serve as a signal peptide directing secretion; it reads MIKRVNKLVLGISLLFLVISITAG. Cysteine 25 is lipidated: N-palmitoyl cysteine. Cysteine 25 carries S-diacylglycerol cysteine lipidation.

Belongs to the staphylococcal tandem lipoprotein family.

The protein localises to the cell membrane. This is an uncharacterized protein from Staphylococcus aureus (strain NCTC 8325 / PS 47).